A 228-amino-acid chain; its full sequence is UPF0328 protein ECU07_0040 (228 aa).

Belongs to the UPF0328 family.

The polypeptide is UPF0328 protein ECU07_0040 (Encephalitozoon cuniculi (strain GB-M1) (Microsporidian parasite)).